We begin with the raw amino-acid sequence, 485 residues long: Probable phosphomannomutase (485 aa).

Serine 86 serves as the catalytic Phosphoserine intermediate. 4 residues coordinate Mg(2+): serine 86, aspartate 236, aspartate 238, and aspartate 240.

It belongs to the phosphohexose mutase family. The cofactor is Mg(2+).

It carries out the reaction alpha-D-mannose 1-phosphate = D-mannose 6-phosphate. In Haemophilus influenzae (strain ATCC 51907 / DSM 11121 / KW20 / Rd), this protein is Probable phosphomannomutase.